Here is a 214-residue protein sequence, read N- to C-terminus: Large ribosomal subunit protein uL3 (214 aa).

A disordered region spans residues 133-153 (GRATHGNSRSHNVPGSIGMAQ). Gln-153 carries the post-translational modification N5-methylglutamine.

This sequence belongs to the universal ribosomal protein uL3 family. As to quaternary structure, part of the 50S ribosomal subunit. Forms a cluster with proteins L14 and L19. Methylated by PrmB.

Functionally, one of the primary rRNA binding proteins, it binds directly near the 3'-end of the 23S rRNA, where it nucleates assembly of the 50S subunit. The protein is Large ribosomal subunit protein uL3 of Cupriavidus metallidurans (strain ATCC 43123 / DSM 2839 / NBRC 102507 / CH34) (Ralstonia metallidurans).